The primary structure comprises 622 residues: DNA-directed RNA polymerase subunit gamma (622 aa).

Residues Cys-70, Cys-72, Cys-85, and Cys-88 each coordinate Zn(2+). Mg(2+) is bound by residues Asp-466, Asp-468, and Asp-470.

This sequence belongs to the RNA polymerase beta' chain family. RpoC1 subfamily. As to quaternary structure, in cyanobacteria the RNAP catalytic core is composed of 2 alpha, 1 beta, 1 beta', 1 gamma and 1 omega subunit. When a sigma factor is associated with the core the holoenzyme is formed, which can initiate transcription. Requires Mg(2+) as cofactor. Zn(2+) is required as a cofactor.

It carries out the reaction RNA(n) + a ribonucleoside 5'-triphosphate = RNA(n+1) + diphosphate. In terms of biological role, DNA-dependent RNA polymerase catalyzes the transcription of DNA into RNA using the four ribonucleoside triphosphates as substrates. This Thermosynechococcus vestitus (strain NIES-2133 / IAM M-273 / BP-1) protein is DNA-directed RNA polymerase subunit gamma.